Consider the following 270-residue polypeptide: uncharacterized protein (270 aa).

This is an uncharacterized protein from Bacillus anthracis.